A 523-amino-acid polypeptide reads, in one-letter code: Cysteine-rich secretory protein LCCL domain-containing 1 (523 aa).

Residues 1–23 (MKYVVQEWLRITTLLFIAQAVSA) form the signal peptide. The SCP domain maps to 66 to 206 (LDLHNKLRGQ…PKAVYLVCNY (141 aa)). Residues 246-298 (ERPYSPHEPEEETNEIERQRSKAQDATAQSRPRTHSPSGSTGSEDSEKNEVIS) form a disordered region. Polar residues predominate over residues 269–288 (QDATAQSRPRTHSPSGSTGS). 2 LCCL domains span residues 302–397 (MSQI…ANSF) and 403–505 (TVQA…PGKQ). 4 disulfide bridges follow: C308-C326, C330-C350, C409-C431, and C435-C458.

Belongs to the CRISP family.

The protein localises to the secreted. The chain is Cysteine-rich secretory protein LCCL domain-containing 1 (CRISPLD1) from Gallus gallus (Chicken).